The chain runs to 129 residues: Follitropin subunit beta (129 aa).

The first 20 residues, M1–S20, serve as a signal peptide directing secretion. 6 cysteine pairs are disulfide-bonded: C21–C69, C35–C84, C38–C122, C46–C100, C50–C102, and C105–C112. N-linked (GlcNAc...) asparagine glycosylation is found at N25 and N42.

It belongs to the glycoprotein hormones subunit beta family. In terms of assembly, heterodimer. The active follitropin is a heterodimer composed of an alpha chain/CGA shared with other hormones and a unique beta chain/FSHB shown here.

Its subcellular location is the secreted. Functionally, together with the alpha chain CGA constitutes follitropin, the follicle-stimulating hormone, and provides its biological specificity to the hormone heterodimer. Binds FSHR, a G protein-coupled receptor, on target cells to activate downstream signaling pathways. Follitropin is involved in follicle development and spermatogenesis in reproductive organs. The chain is Follitropin subunit beta (FSHB) from Ailuropoda melanoleuca (Giant panda).